A 356-amino-acid chain; its full sequence is Phosphoribosylformylglycinamidine cyclo-ligase (356 aa).

Belongs to the AIR synthase family.

It is found in the cytoplasm. The enzyme catalyses 2-formamido-N(1)-(5-O-phospho-beta-D-ribosyl)acetamidine + ATP = 5-amino-1-(5-phospho-beta-D-ribosyl)imidazole + ADP + phosphate + H(+). The protein operates within purine metabolism; IMP biosynthesis via de novo pathway; 5-amino-1-(5-phospho-D-ribosyl)imidazole from N(2)-formyl-N(1)-(5-phospho-D-ribosyl)glycinamide: step 2/2. This is Phosphoribosylformylglycinamidine cyclo-ligase from Desulfotalea psychrophila (strain LSv54 / DSM 12343).